The primary structure comprises 129 residues: Fluoride-specific ion channel FluC (129 aa).

Helical transmembrane passes span I6–I26, I35–A55, T73–L93, and I98–G118. Na(+) is bound by residues G77 and T80.

The protein belongs to the fluoride channel Fluc/FEX (TC 1.A.43) family.

Its subcellular location is the cell inner membrane. The enzyme catalyses fluoride(in) = fluoride(out). With respect to regulation, na(+) is not transported, but it plays an essential structural role and its presence is essential for fluoride channel function. Functionally, fluoride-specific ion channel. Important for reducing fluoride concentration in the cell, thus reducing its toxicity. In Sulfurimonas denitrificans (strain ATCC 33889 / DSM 1251) (Thiomicrospira denitrificans (strain ATCC 33889 / DSM 1251)), this protein is Fluoride-specific ion channel FluC.